Here is a 356-residue protein sequence, read N- to C-terminus: MRVTDFSFELPESLIAHYPMPERSSCRLLSLDGPTGALTHGTFTDLLDKLNPGDLLVFNNTRVIPARLFGRKASGGKIEVLVERMLDEKRILAHIRASKAPKPGAELLLGDDESINATMTARHGALFEVEFNDDRSVLDILNSIGHIPLPPYIDRPDEDADRELYQTVYSEKPGAVAAPTAGLHFDEPLLEKLRAKGVEMAFVTLHVGAGTFQPVRVDTIEDHIMHSEYAEVPQDVVEAVLAAKARGNRVIAVGTTSVRSLESAAQAAKNDLIEPFFDDTQIFIYPGFQYKVVDALVTNFHLPESTLIMLVSAFAGYQHTMNAYKAAVEEKYRFFSYGDAMFITYNPQAINERVGE.

This sequence belongs to the QueA family. As to quaternary structure, monomer.

It localises to the cytoplasm. It carries out the reaction 7-aminomethyl-7-carbaguanosine(34) in tRNA + S-adenosyl-L-methionine = epoxyqueuosine(34) in tRNA + adenine + L-methionine + 2 H(+). It functions in the pathway tRNA modification; tRNA-queuosine biosynthesis. Its function is as follows. Transfers and isomerizes the ribose moiety from AdoMet to the 7-aminomethyl group of 7-deazaguanine (preQ1-tRNA) to give epoxyqueuosine (oQ-tRNA). The sequence is that of S-adenosylmethionine:tRNA ribosyltransferase-isomerase from Escherichia coli O1:K1 / APEC.